A 334-amino-acid chain; its full sequence is L-lactate dehydrogenase B chain (334 aa).

Position 2 is an N-acetylalanine (Ala2). Lys7 carries the N6-acetyllysine modification. NAD(+) contacts are provided by residues 30–58 and Arg100; that span reads GQVG…LEDK. The residue at position 44 (Ser44) is a Phosphoserine. Lys58 carries the post-translational modification N6-acetyllysine. Substrate is bound at residue Arg107. Lys119 carries the post-translational modification N6-acetyllysine. Residue Asn139 coordinates NAD(+). Substrate-binding residues include Asn139 and Arg170. The active-site Proton acceptor is the His194. Tyr240 bears the Phosphotyrosine mark. Thr249 contributes to the substrate binding site. Lys329 carries the post-translational modification N6-acetyllysine.

It belongs to the LDH/MDH superfamily. LDH family. In terms of assembly, homotetramer. Interacts with PTEN upstream reading frame protein MP31; the interaction leads to inhibition of mitochondrial lactate dehydrogenase activity, preventing conversion of lactate to pyruvate in mitochondria.

Its subcellular location is the cytoplasm. It localises to the mitochondrion inner membrane. It carries out the reaction (S)-lactate + NAD(+) = pyruvate + NADH + H(+). The protein operates within fermentation; pyruvate fermentation to lactate; (S)-lactate from pyruvate: step 1/1. In terms of biological role, interconverts simultaneously and stereospecifically pyruvate and lactate with concomitant interconversion of NADH and NAD(+). This chain is L-lactate dehydrogenase B chain (Ldhb), found in Rattus norvegicus (Rat).